A 126-amino-acid polypeptide reads, in one-letter code: Glycine cleavage system H protein (126 aa).

In terms of domain architecture, Lipoyl-binding spans 22 to 103; the sequence is KAYIGITDYA…PYGSWMALVE (82 aa). Residue Lys63 is modified to N6-lipoyllysine.

The protein belongs to the GcvH family. As to quaternary structure, the glycine cleavage system is composed of four proteins: P, T, L and H. (R)-lipoate is required as a cofactor.

The glycine cleavage system catalyzes the degradation of glycine. The H protein shuttles the methylamine group of glycine from the P protein to the T protein. This Thermoanaerobacter sp. (strain X514) protein is Glycine cleavage system H protein.